The chain runs to 277 residues: (-)-trans-carveol dehydrogenase (277 aa).

10 to 32 (LITGAARGQGRSHAIKLAEEGAD) contributes to the NAD(+) binding site. S156 is a substrate binding site. Residue Y169 is the Proton acceptor of the active site.

This sequence belongs to the short-chain dehydrogenases/reductases (SDR) family. In terms of assembly, homotetramer.

It catalyses the reaction (1S,5R)-carveol + NAD(+) = (R)-carvone + NADH + H(+). It carries out the reaction (1S,5S)-carveol + NAD(+) = (S)-carvone + NADH + H(+). The protein operates within terpene metabolism; limonene degradation. Competitively inhibited by the product (S)- or (R)-carvone. Its function is as follows. Catalyzes the oxidation of carveol to carvone, with a strong stereoselectivity since it efficiently converts only the (6S)-stereoisomers, of which (-)-(4R,6S)-trans-carveol is the better substrate. Displays a broad substrate specificity with a preference for substituted cyclohexanols, and does not catalyze the oxidation of primary or short chain aliphatic secondary alcohols. Is also able, albeit more slowly, to oxidize limonene-1,2-diol into 1-hydroxy-2-oxolimonene. The chain is (-)-trans-carveol dehydrogenase (limC) from Rhodococcus erythropolis (Arthrobacter picolinophilus).